The sequence spans 121 residues: Mediator of RNA polymerase II transcription subunit 22 (121 aa).

It belongs to the Mediator complex subunit 22 family. In terms of assembly, component of the Mediator complex.

The protein localises to the nucleus. In terms of biological role, component of the Mediator complex, a coactivator involved in the regulated transcription of nearly all RNA polymerase II-dependent genes. Mediator functions as a bridge to convey information from gene-specific regulatory proteins to the basal RNA polymerase II transcription machinery. Mediator is recruited to promoters by direct interactions with regulatory proteins and serves as a scaffold for the assembly of a functional preinitiation complex with RNA polymerase II and the general transcription factors. This is Mediator of RNA polymerase II transcription subunit 22 (SRB6) from Kluyveromyces lactis (strain ATCC 8585 / CBS 2359 / DSM 70799 / NBRC 1267 / NRRL Y-1140 / WM37) (Yeast).